We begin with the raw amino-acid sequence, 303 residues long: Ornithine carbamoyltransferase (303 aa).

Carbamoyl phosphate contacts are provided by residues S52–T55, Q79, R103, and H130–Q133. Residues N161, D221, and S225–M226 each bind L-ornithine. Residues C260–L261 and R288 contribute to the carbamoyl phosphate site.

The protein belongs to the aspartate/ornithine carbamoyltransferase superfamily. OTCase family.

It is found in the cytoplasm. It catalyses the reaction carbamoyl phosphate + L-ornithine = L-citrulline + phosphate + H(+). The protein operates within amino-acid biosynthesis; L-arginine biosynthesis; L-arginine from L-ornithine and carbamoyl phosphate: step 1/3. Functionally, reversibly catalyzes the transfer of the carbamoyl group from carbamoyl phosphate (CP) to the N(epsilon) atom of ornithine (ORN) to produce L-citrulline. The chain is Ornithine carbamoyltransferase (argF) from Rhizobium meliloti (strain 1021) (Ensifer meliloti).